The primary structure comprises 519 residues: Glycerophosphoinositol permease 1 (519 aa).

The interval 1–32 is disordered; the sequence is MSDLVKSSEVIETTEVPPHNNNNNKRHFKYDS. Residues 39 to 59 traverse the membrane as a helical segment; the sequence is LAGGVKLKDALMILCAGFALI. Residue Asn93 is glycosylated (N-linked (GlcNAc...) asparagine). The next 3 helical transmembrane spans lie at 94–114, 117–137, and 141–161; these read ASLVGTIFGQVIIGLTADYIG, WSIVTATCFLIFGTMMCAASH, and VNGMFWMLTIFRGVTGFGIGA. A glycan (N-linked (GlcNAc...) asparagine) is linked at Asn175. 8 helical membrane passes run 186-206, 216-236, 273-293, 313-333, 337-357, 363-383, 404-424, and 432-452; these read ILATNLPLSFGGPFALCIFLI, DAIWRTMFAIGCFWPLSVFYF, VAWFLYDFVTFPNGIFSAGII, LLLGAIALPGVFVGAYVVDIL, YTMMIGFCGYIVFGLIVGCGY, ITGLFIVFYGLMMSCGNFGPG, GISAAIGKVGAVVGTKTFSPI, and WTFIIAAICGLAGVLVTFIFI. The span at 487–500 shows a compositional bias: acidic residues; the sequence is EEEDLEGSSEDSSD. The tract at residues 487-519 is disordered; it reads EEEDLEGSSEDSSDGEIVKNNTKNDVEKVDALK. N-linked (GlcNAc...) asparagine glycosylation occurs at Asn506. Residues 508-519 show a composition bias toward basic and acidic residues; sequence TKNDVEKVDALK.

Belongs to the major facilitator superfamily. Sugar transporter (TC 2.A.1.1) family.

The protein localises to the cell membrane. It catalyses the reaction sn-glycero-3-phospho-1D-myo-inositol(out) = sn-glycero-3-phospho-1D-myo-inositol(in). Its function is as follows. Glycerophosphodiester transporter that mediates uptake of glycerophosphoinositol (GroPIns) as a source of inositol and phosphate. Does not possess detectable glycerophosphocholine (GroPCho) transport activity. Although no glycerophosphoinositol transport activity occurs in the absence of GIT1, C.albicans is still able to use glycerophosphoinositol as a phosphate source at pH 7.5, albeit slowly. Thus, a second, GIT1-independent, mechanism must exist for utilizing glycerophosphoinositol as a phosphate source at physiological pH. The expanded ability to utilize GroPIns and GroPCho results from the organism's pathogenic nature and its need to occupy a variety of environments within its host organism. This possibility is buttressed by the fact that GroPIns and GroPCho are present and abundant in human fluids. The protein is Glycerophosphoinositol permease 1 of Candida albicans (strain SC5314 / ATCC MYA-2876) (Yeast).